Reading from the N-terminus, the 283-residue chain is 2-dehydro-3-deoxyphosphooctonate aldolase (283 aa).

It belongs to the KdsA family.

The protein resides in the cytoplasm. It carries out the reaction D-arabinose 5-phosphate + phosphoenolpyruvate + H2O = 3-deoxy-alpha-D-manno-2-octulosonate-8-phosphate + phosphate. The protein operates within carbohydrate biosynthesis; 3-deoxy-D-manno-octulosonate biosynthesis; 3-deoxy-D-manno-octulosonate from D-ribulose 5-phosphate: step 2/3. It functions in the pathway bacterial outer membrane biogenesis; lipopolysaccharide biosynthesis. The protein is 2-dehydro-3-deoxyphosphooctonate aldolase of Prochlorococcus marinus (strain MIT 9313).